We begin with the raw amino-acid sequence, 637 residues long: 1-deoxy-D-xylulose-5-phosphate synthase (637 aa).

Thiamine diphosphate-binding positions include H75 and 116–118; that span reads AHS. Position 147 (D147) interacts with Mg(2+). Residues 148 to 149, N177, Y288, and E370 each bind thiamine diphosphate; that span reads GA. N177 is a binding site for Mg(2+).

It belongs to the transketolase family. DXPS subfamily. In terms of assembly, homodimer. Requires Mg(2+) as cofactor. Thiamine diphosphate serves as cofactor.

It catalyses the reaction D-glyceraldehyde 3-phosphate + pyruvate + H(+) = 1-deoxy-D-xylulose 5-phosphate + CO2. The protein operates within metabolic intermediate biosynthesis; 1-deoxy-D-xylulose 5-phosphate biosynthesis; 1-deoxy-D-xylulose 5-phosphate from D-glyceraldehyde 3-phosphate and pyruvate: step 1/1. In terms of biological role, catalyzes the acyloin condensation reaction between C atoms 2 and 3 of pyruvate and glyceraldehyde 3-phosphate to yield 1-deoxy-D-xylulose-5-phosphate (DXP). This is 1-deoxy-D-xylulose-5-phosphate synthase from Cupriavidus metallidurans (strain ATCC 43123 / DSM 2839 / NBRC 102507 / CH34) (Ralstonia metallidurans).